Consider the following 603-residue polypeptide: UvrABC system protein C (603 aa).

The GIY-YIG domain maps to 15–92; sequence DQPGCYLMKD…IKKHDPRFNI (78 aa). The region spanning 197-232 is the UVR domain; sequence KTVKNDLMKKMQEAAENMEFEKAGEFRDQINAIETT.

This sequence belongs to the UvrC family. In terms of assembly, interacts with UvrB in an incision complex.

The protein localises to the cytoplasm. Functionally, the UvrABC repair system catalyzes the recognition and processing of DNA lesions. UvrC both incises the 5' and 3' sides of the lesion. The N-terminal half is responsible for the 3' incision and the C-terminal half is responsible for the 5' incision. The sequence is that of UvrABC system protein C from Listeria monocytogenes serovar 1/2a (strain ATCC BAA-679 / EGD-e).